Consider the following 212-residue polypeptide: Protein G1-like7 (212 aa).

The segment covering 1-22 has biased composition (low complexity); sequence MDPSGPGPSSAAAGGAPAVAAA. Disordered regions lie at residues 1–34 and 148–212; these read MDPSGPGPSSAAAGGAPAVAAAPQPPAQLSRYES and KARG…PSAS. Residues 31–158 enclose the ALOG domain; it reads RYESQKRRDW…ARGIPYEKKK (128 aa). A Nuclear localization signal motif is present at residues 156–160; it reads KKKRK. A compositionally biased stretch (low complexity) spans 173 to 182; sequence SGSSSAAAAA. Residues 183-194 are compositionally biased toward gly residues; the sequence is AGGGDTGSGGGA.

Belongs to the plant homeotic and developmental regulators ALOG protein family.

It localises to the nucleus. Functionally, probable transcription regulator that acts as a developmental regulator by promoting cell growth in response to light. This Oryza sativa subsp. indica (Rice) protein is Protein G1-like7.